The primary structure comprises 468 residues: UDP-N-acetylmuramate--L-alanine ligase (468 aa).

114–120 (GTHGKTT) is an ATP binding site.

Belongs to the MurCDEF family.

The protein localises to the cytoplasm. The catalysed reaction is UDP-N-acetyl-alpha-D-muramate + L-alanine + ATP = UDP-N-acetyl-alpha-D-muramoyl-L-alanine + ADP + phosphate + H(+). Its pathway is cell wall biogenesis; peptidoglycan biosynthesis. Functionally, cell wall formation. This Brucella anthropi (strain ATCC 49188 / DSM 6882 / CCUG 24695 / JCM 21032 / LMG 3331 / NBRC 15819 / NCTC 12168 / Alc 37) (Ochrobactrum anthropi) protein is UDP-N-acetylmuramate--L-alanine ligase.